Consider the following 223-residue polypeptide: MAMKSLSFLAALSLLALTLPLTIASDPSQLQDFCVSANSSANGVFVNGKFCKDPKLVTADDFFFPGLQTARPITSPVGSTVTAVNVNNLLGLNTLGISLVRIDYAVDGQNPPHTHPRATEILVVELGTLLVGFVTSNPDNRLFTKVLNEGDVFVFPEGLIHFQANIGKAPAVAFAALSSQNPGVITIAPTVFGANPAINPNILAKAFQVDPRVVMDLQTKFKK.

The first 24 residues, 1–24 (MAMKSLSFLAALSLLALTLPLTIA), serve as a signal peptide directing secretion. C34 and C51 are disulfide-bonded. The N-linked (GlcNAc...) asparagine glycan is linked to N38. Residues 65–215 (PGLQTARPIT…AFQVDPRVVM (151 aa)) enclose the Cupin type-1 domain. Positions 113, 115, 120, and 161 each coordinate Mn(2+).

The protein belongs to the germin family. In terms of assembly, oligomer (believed to be a pentamer but probably hexamer).

The protein resides in the secreted. The protein localises to the extracellular space. Its subcellular location is the apoplast. Its function is as follows. May play a role in plant defense. Probably has no oxalate oxidase activity even if the active site is conserved. The polypeptide is Germin-like protein subfamily 1 member 10 (Arabidopsis thaliana (Mouse-ear cress)).